Here is a 1218-residue protein sequence, read N- to C-terminus: NACHT, LRR and PYD domains-containing protein 1a allele 1 (1218 aa).

The disordered stretch occupies residues 1-61; that stretch reads MEESQSKQES…SLPGWSSTSN (61 aa). A compositionally biased stretch (polar residues) spans 7–29; that stretch reads KQESNTRVAQHGSQQDVDPTFQT. Residues 175–484 form the NACHT domain; the sequence is QLVIIEGAAG…EFFAAMSYIL (310 aa). Residue 181–188 coordinates ATP; that stretch reads GAAGIGKS. LRR repeat units follow at residues 343-364, 673-693, and 730-750; these read KERN…LTLC, NLEE…RSLC, and RLAE…RQLC. The span at 799 to 815 shows a compositional bias: polar residues; it reads TMPTENTDGEESLTSSK. Residues 799-842 form a disordered region; it reads TMPTENTDGEESLTSSKQQQQQSGDKHMEPLGTDDDFWGPSGPV. The tract at residues 835–968 is ZU5; the sequence is FWGPSGPVST…HFAVLENPSF (134 aa). The region spanning 835–1118 is the FIIND domain; the sequence is FWGPSGPVST…LRPALPRMAS (284 aa). A UPA region spans residues 969–1118; it reads SPMGVLLRMI…LRPALPRMAS (150 aa). A CARD domain is found at 1122-1211; sequence DAPALLHFVD…HLIMDLLEKS (90 aa).

The protein belongs to the NLRP family. Interacts (via LRR repeats) with BCL2 and BCL2L1 (via the loop between motifs BH4 and BH3). Interacts with NOD2; this interaction is enhanced in the presence of muramyl dipeptide (MDP) and increases IL1B release. Interacts with EIF2AK2/PKR; this interaction requires EIF2AK2 activity, is accompanied by EIF2AK2 autophosphorylation and promotes inflammasome assembly in response to danger-associated signals. Interacts with MEFV; this interaction targets Nlrp1a to degradation by autophagy, hence preventing excessive IL1B- and IL18-mediated inflammation. Interacts with DPP9; leading to inhibit activation of the inflammasome. DPP9 acts via formation of a ternary complex, composed of a DPP9 homodimer, one full-length NLRP1 protein, and one cleaved C-terminus of Nlrp1a (NACHT, LRR and PYD domains-containing protein 1a, C-terminus). Interacts with DPP8; leading to inhibit activation of the inflammasome, probably via formation of a ternary complex with DPP8. As to quaternary structure, interacts with the C-terminal part of Nlrp1a (NACHT, LRR and PYD domains-containing protein 1a, C-terminus) in absence of pathogens and other damage-associated signals. In terms of assembly, interacts with the N-terminal part of Nlrp1a (NACHT, LRR and PYD domains-containing protein 1a, N-terminus) in absence of pathogens and other damage-associated signals. Homomultimer; forms the Nlrp1a inflammasome polymeric complex, a filament composed of homopolymers of this form in response to pathogens and other damage-associated signals. The Nlrp1a inflammasome polymeric complex directly recruits pro-caspase-1 (proCASP1) independently of PYCARD/ASC. Interacts (via CARD domain) with CASP1 (via CARD domain); leading to CASP1 activation. In terms of processing, autocatalytically cleaved. Autocatalytic cleavage in FIIND region occurs constitutively, prior to activation signals, and is required for inflammasome activity (IL1B release), possibly by facilitating CASP1 binding. Both N- and C-terminal parts remain associated non-covalently. (Microbial infection) Cleavage by B.anthracis lethal toxin (LT) endopeptidase promotes ubiquitination and degradation of the N-terminal part, releasing the cleaved C-terminal part of the protein (NACHT, LRR and PYD domains-containing protein 1a, C-terminus), which polymerizes and forms the Nlrp1a inflammasome. Post-translationally, ubiquitinated in response to pathogen-associated signals, leading to its degradation by the proteasome and subsequent release of the cleaved C-terminal part of the protein (NACHT, LRR and PYD domains-containing protein 1a, C-terminus), which polymerizes and forms the Nlrp1a inflammasome.

The protein resides in the cytoplasm. Its subcellular location is the cytosol. The protein localises to the nucleus. It is found in the inflammasome. Its activity is regulated as follows. Activated by cleavage by B.anthracis lethal toxin (LT) endopeptidase. Cleavage by LT promotes ubiquitination and degradation of the N-terminal part, releasing the cleaved C-terminal part of the protein (NACHT, LRR and PYD domains-containing protein 1a, C-terminus), which polymerizes and forms the Nlrp1a inflammasome. Nlrp1a inflammasome is inhibited by DPP8 and DPP9, which sequester the C-terminal fragment of Nlrp1a (NACHT, LRR and PYD domains-containing protein 1a, C-terminus) in a ternary complex, thereby preventing Nlrp1a oligomerization and activation. Nlrp1a inflammasome is weakly activated by Val-boroPro (Talabostat, PT-100), an inhibitor of dipeptidyl peptidases DPP8 and DPP9. Val-boroPro relieves inhibition of DPP8 and/or DPP9 by promoting disruption of the ternary complex, releasing its C-terminal part from autoinhibition. Weakly activated by Toxoplasma gondii. In terms of biological role, acts as the sensor component of the Nlrp1a inflammasome, which mediates inflammasome activation in response to various pathogen-associated signals, leading to subsequent pyroptosis. Inflammasomes are supramolecular complexes that assemble in the cytosol in response to pathogens and other damage-associated signals and play critical roles in innate immunity and inflammation. Acts as a recognition receptor (PRR): recognizes specific pathogens and other damage-associated signals, such as B.anthracis lethal toxin (LT) or Val-boroPro inhibitor, and mediates the formation of the inflammasome polymeric complex. In response to pathogen-associated signals, the N-terminal part of Nlrp1a is degraded by the proteasome, releasing the cleaved C-terminal part of the protein (NACHT, LRR and PYD domains-containing protein 1a, C-terminus), which polymerizes to initiate the formation of the inflammasome complex: the inflammasome directly recruits pro-caspase-1 (proCASP1) independently of PYCARD/ASC and promotes caspase-1 (CASP1) activation, which subsequently cleaves and activates inflammatory cytokines IL1B and IL18 and gasdermin-D (GSDMD), leading to pyroptosis. In the absence of GSDMD expression, the Nlrp1a inflammasome is able to recruit and activate CASP8, leading to activation of gasdermin-E (GSDME). Functionally, constitutes the precursor of the Nlrp1a inflammasome, which mediates autoproteolytic processing within the FIIND domain to generate the N-terminal and C-terminal parts, which are associated non-covalently in absence of pathogens and other damage-associated signals. Regulatory part that prevents formation of the Nlrp1a inflammasome: in absence of pathogens and other damage-associated signals, interacts with the C-terminal part of Nlrp1a (NACHT, LRR and PYD domains-containing protein 1a, C-terminus), preventing activation of the Nlrp1a inflammasome. In response to pathogen-associated signals, this part is ubiquitinated by the N-end rule pathway and degraded by the proteasome, releasing the cleaved C-terminal part of the protein, which polymerizes and forms the Nlrp1a inflammasome. Its function is as follows. Constitutes the active part of the Nlrp1a inflammasome. In absence of pathogens and other damage-associated signals, interacts with the N-terminal part of Nlrp1a (NACHT, LRR and PYD domains-containing protein 1a, N-terminus), preventing activation of the Nlrp1a inflammasome. In response to pathogen-associated signals, the N-terminal part of Nlrp1a is degraded by the proteasome, releasing this form, which polymerizes to form the Nlrp1a inflammasome complex: the Nlrp1a inflammasome complex then directly recruits pro-caspase-1 (proCASP1) and promotes caspase-1 (CASP1) activation, leading to gasdermin-D (GSDMD) cleavage and subsequent pyroptosis. This is NACHT, LRR and PYD domains-containing protein 1a allele 1 from Rattus norvegicus (Rat).